Consider the following 682-residue polypeptide: DNA-directed RNA polymerase subunit beta' (682 aa).

Zn(2+) is bound by residues Cys69, Cys71, Cys87, and Cys90. Mg(2+) is bound by residues Asp489, Asp491, and Asp493.

It belongs to the RNA polymerase beta' chain family. RpoC1 subfamily. In terms of assembly, in plastids the minimal PEP RNA polymerase catalytic core is composed of four subunits: alpha, beta, beta', and beta''. When a (nuclear-encoded) sigma factor is associated with the core the holoenzyme is formed, which can initiate transcription. Requires Mg(2+) as cofactor. Zn(2+) serves as cofactor.

The protein localises to the plastid. The protein resides in the chloroplast. It carries out the reaction RNA(n) + a ribonucleoside 5'-triphosphate = RNA(n+1) + diphosphate. In terms of biological role, DNA-dependent RNA polymerase catalyzes the transcription of DNA into RNA using the four ribonucleoside triphosphates as substrates. The polypeptide is DNA-directed RNA polymerase subunit beta' (Acorus gramineus (Dwarf sweet flag)).